Reading from the N-terminus, the 801-residue chain is U-box domain-containing protein 34 (801 aa).

The interval 205–309 (RSPTLPDPRQ…PETSRKSKKV (105 aa)) is disordered. A compositionally biased stretch (polar residues) spans 236-254 (LTCNKPKTPQSSKASSATT). The span at 289-309 (VSEHRDSDRSPPETSRKSKKV) shows a compositional bias: basic and acidic residues. The stretch at 301–395 (ETSRKSKKVE…ETAKALLARE (95 aa)) forms a coiled coil. The region spanning 442-705 (FSPEKVIGEG…DLKSEVIPVL (264 aa)) is the Protein kinase domain. ATP is bound by residues 448-456 (IGEGGYGKV) and K469. D564 functions as the Proton acceptor in the catalytic mechanism. One can recognise a U-box domain in the interval 724-797 (RAPSHYFCPI…RDWKSRVRFS (74 aa)).

It belongs to the protein kinase superfamily. Ser/Thr protein kinase family.

It carries out the reaction L-seryl-[protein] + ATP = O-phospho-L-seryl-[protein] + ADP + H(+). The enzyme catalyses L-threonyl-[protein] + ATP = O-phospho-L-threonyl-[protein] + ADP + H(+). The catalysed reaction is S-ubiquitinyl-[E2 ubiquitin-conjugating enzyme]-L-cysteine + [acceptor protein]-L-lysine = [E2 ubiquitin-conjugating enzyme]-L-cysteine + N(6)-ubiquitinyl-[acceptor protein]-L-lysine.. It functions in the pathway protein modification; protein ubiquitination. Functionally, functions as an E3 ubiquitin ligase. The chain is U-box domain-containing protein 34 (PUB34) from Arabidopsis thaliana (Mouse-ear cress).